The chain runs to 261 residues: Probable membrane transporter protein ORF9 (261 aa).

The next 8 helical transmembrane spans lie at 8-28 (LLAFLFVAAFIAGFIDSIAGG), 29-49 (GGMITIPAMLIAGIPPLQTLG), 78-98 (LPMALMSAAGAVLGALLATIV), 100-120 (GDVLKAILPFLLIAIALYFGL), 133-151 (VTPFVFTLTLVPLIGFYDG), 152-171 (VFGPGTGSFFMLGFVTLAGF), 189-209 (VGAFGVFLFFGAVLWKVGLLM), and 231-251 (IIKPLLVIVSIALAIRLLADP).

It belongs to the 4-toluene sulfonate uptake permease (TSUP) (TC 2.A.102) family.

It is found in the cell membrane. The protein is Probable membrane transporter protein ORF9 of Sinorhizobium sp.